The following is a 475-amino-acid chain: Ataxin-10 (475 aa).

At Arg-10 the chain carries Omega-N-methylarginine. 2 positions are modified to phosphoserine: Ser-12 and Ser-77. Thr-82 is modified (phosphothreonine). Ser-430 carries the phosphoserine modification.

It belongs to the ataxin-10 family. As to quaternary structure, homooligomer. Interacts with GNB2. Interacts with IQCB1. Interacts with OGT. In terms of processing, polyubiquitinated. Post-translationally, phosphorylation at Ser-12 by AURKB promotes the association of ATXN10 with PLK1. Phosphorylation at Ser-77 and Thr-82 by PLK1 may play a role in the regulation of cytokinesis and may stimulate the proteasome-mediated degradation of ATXN10.

Its subcellular location is the cytoplasm. The protein localises to the perinuclear region. It localises to the midbody. The protein resides in the cytoskeleton. It is found in the cilium basal body. Its subcellular location is the microtubule organizing center. The protein localises to the centrosome. It localises to the centriole. Its function is as follows. May play a role in the regulation of cytokinesis. May play a role in signaling by stimulating protein glycosylation. Induces neuritogenesis by activating the Ras-MAP kinase pathway and is necessary for the survival of cerebellar neurons. Does not appear to play a major role in ciliogenesis. In Macaca fascicularis (Crab-eating macaque), this protein is Ataxin-10 (ATXN10).